A 1070-amino-acid chain; its full sequence is Probable arabinosyltransferase C (1070 aa).

12 consecutive transmembrane segments (helical) span residues Ile-10 to Leu-32, Leu-210 to Leu-232, Ser-247 to Val-269, Val-399 to Gly-421, Ile-425 to Leu-442, Phe-449 to Arg-471, Ser-512 to Leu-534, Ser-547 to Thr-564, Val-574 to Arg-596, Val-603 to Val-625, Thr-645 to Val-664, and Ser-685 to Ile-707.

Belongs to the emb family.

It is found in the cell membrane. Its function is as follows. Arabinosyl transferase responsible for the polymerization of arabinose into the arabinan of arabinogalactan. The chain is Probable arabinosyltransferase C (embC) from Mycobacterium leprae (strain TN).